A 368-amino-acid polypeptide reads, in one-letter code: Putative flavoprotein monooxygenase (368 aa).

FAD is bound by residues Ala14, Glu34, Ser41, 52 to 53, Val110, Ala307, and Ile319; that span reads IT.

The cofactor is FAD.

In terms of biological role, FAD-binding protein that may have monooxygenase activity using NADPH and/or NADH as an electron donor. The sequence is that of Putative flavoprotein monooxygenase from Staphylococcus aureus (strain Mu50 / ATCC 700699).